We begin with the raw amino-acid sequence, 146 residues long: Anti-sigma F factor (146 aa).

This sequence belongs to the anti-sigma-factor family.

The enzyme catalyses L-seryl-[protein] + ATP = O-phospho-L-seryl-[protein] + ADP + H(+). It catalyses the reaction L-threonyl-[protein] + ATP = O-phospho-L-threonyl-[protein] + ADP + H(+). Binds to sigma F and blocks its ability to form an RNA polymerase holoenzyme (E-sigma F). Phosphorylates SpoIIAA on a serine residue. This phosphorylation may enable SpoIIAA to act as an anti-anti-sigma factor that counteracts SpoIIAB and thus releases sigma F from inhibition. The polypeptide is Anti-sigma F factor (Geobacillus sp. (strain WCH70)).